Consider the following 62-residue polypeptide: Prokaryotic ubiquitin-like protein Pup (62 aa).

The interval 1–29 (MSQQSLNAPGPGAEDGNDPEAVTGGQTFA) is disordered. The ARC ATPase binding stretch occupies residues 21 to 56 (AVTGGQTFASAQAADDLLDEIDSVLESNAETFVRSF). Q62 carries the deamidated glutamine modification. Q62 is covalently cross-linked (Isoglutamyl lysine isopeptide (Gln-Lys) (interchain with K-? in acceptor proteins)).

This sequence belongs to the prokaryotic ubiquitin-like protein family. In terms of assembly, strongly interacts with the proteasome-associated ATPase ARC through a hydrophobic interface; the interacting region of Pup lies in its C-terminal half. There is one Pup binding site per ARC hexamer ring. Is modified by deamidation of its C-terminal glutamine to glutamate by the deamidase Dop, a prerequisite to the subsequent pupylation process.

It functions in the pathway protein degradation; proteasomal Pup-dependent pathway. Functionally, protein modifier that is covalently attached to lysine residues of substrate proteins, thereby targeting them for proteasomal degradation. The tagging system is termed pupylation. In Brachybacterium faecium (strain ATCC 43885 / DSM 4810 / JCM 11609 / LMG 19847 / NBRC 14762 / NCIMB 9860 / 6-10), this protein is Prokaryotic ubiquitin-like protein Pup.